Consider the following 752-residue polypeptide: Two pore channel protein 2 (752 aa).

Residues 1–84 (MAEPQAESEP…RRYYSNVCQR (84 aa)) lie on the Cytoplasmic side of the membrane. A helical transmembrane segment spans residues 85–105 (TLSFTIFLILFLAFIETPSSL). Residues 106–127 (TSTADVRYRAAPWEPPCGLTES) are Extracellular-facing. The chain crosses the membrane as a helical span at residues 128–148 (VEVLCLLVFAADLSVKGYLFG). Residues 149 to 155 (WAHFQKN) are Cytoplasmic-facing. Residues 156–176 (LWLLGYLVVLVVSLVDWTVSL) traverse the membrane as a helical segment. At 177 to 183 (SLVCHEP) the chain is on the extracellular side. The helical transmembrane segment at 184-204 (LRIRRLLRPFFLLQNSSMMKK) threads the bilayer. The interaction with phosphatidylinositol 3,5-bisphosphate stretch occupies residues 203 to 207 (KKTLK). The Cytoplasmic portion of the chain corresponds to 205 to 218 (TLKCIRWSLPEMAS). Residues 219-239 (VGLLLAIHLCLFTMFGMLLFA) form a helical membrane-spanning segment. Topologically, residues 240-254 (GGKQDDGQDRERLTY) are extracellular. Positions 255-279 (FQNLPESLTSLLVLLTTANNPDVMI) form an intramembrane region, helical; Pore-forming. The Extracellular portion of the chain corresponds to 280 to 289 (PAYSKNRAYA). Residues 290–310 (IFFIVFTVIGSLFLMNLLTAI) form a helical membrane-spanning segment. The Cytoplasmic portion of the chain corresponds to 311–436 (IYSQFRGYLM…FLFGHYYFDY (126 aa)). The chain crosses the membrane as a helical span at residues 437 to 459 (LGNLIALANLVSICVFLVLDADV). Residues 460 to 465 (LPAERD) are Extracellular-facing. The chain crosses the membrane as a helical span at residues 466 to 486 (DFILGILNCVFIVYYLLEMLL). At 487–502 (KVFALGLRGYLSYPSN) the chain is on the cytoplasmic side. Residues 503–523 (VFDGLLTVVLLVLEISTLAVY) traverse the membrane as a helical segment. The Extracellular portion of the chain corresponds to 524–554 (RLPHPGWRPEMVGLLSLWDMTRMLNMLIVFR). The helical transmembrane segment at 555–575 (FLRIIPSMKLMAVVASTVLGL) threads the bilayer. Residues 576-580 (VQNMR) lie on the Cytoplasmic side of the membrane. The chain crosses the membrane as a helical span at residues 581–601 (AFGGILVVVYYVFAIIGINLF). The Extracellular segment spans residues 602–635 (RGVIVALPGNSSLAPANGSAPCGSFEQLEYWANN). N-linked (GlcNAc...) asparagine glycans are attached at residues Asn611 and Asn618. Positions 636–658 (FDDFAAALVTLWNLMVVNNWQVF) form an intramembrane region, helical; Pore-forming. At 659 to 673 (LDAYRRYSGPWSKIY) the chain is on the extracellular side. Residues 674–694 (FVLWWLVSSVIWVNLFLALIL) traverse the membrane as a helical segment. At 695–752 (ENFLHKWDPRSHLQPLAGTPEATYQMTVELLFRDILEEPGEDELTERLSQHPHLWLCR) the chain is on the cytoplasmic side.

This sequence belongs to the calcium channel alpha-1 subunit (TC 1.A.1.11) family. Two pore calcium channel subfamily. As to quaternary structure, homodimer. Interacts with LRRK2. Interacts with HAX1. Interacts with MTOR; the interaction is required for TPCN2 ATP sensitivity. Found in a complex with LSM12, TPCN1 and TPCN2. Interacts with LSM12. In terms of processing, N-glycosylated. As to expression, widely expressed. Expressed at high level in liver and kidney.

The protein localises to the late endosome membrane. Its subcellular location is the lysosome membrane. The protein resides in the melanosome membrane. It carries out the reaction Na(+)(in) = Na(+)(out). The enzyme catalyses Ca(2+)(in) = Ca(2+)(out). With respect to regulation, regulated by Mg(2+) ions, cytosolic Mg(2+) selectively inhibits outward current while lysosomal Mg(2+) modestly inhibits both the outward and inward currents. In the absence of Mg(2+), NAADP readily activates TPCN2, with properties similar to PI(3,5)P2. Na(+) current is inhibited by ATP in a MTORC-dependent manner. ATP sensitivity is independent of PI(3,5)P2. Both current elicited by PI(3,5)P2 as well as NAADP are inhibited by tetrandrine. In terms of biological role, intracellular channel initially characterized as a non-selective Ca(2+)-permeable channel activated by NAADP (nicotinic acid adenine dinucleotide phosphate), it is also a highly-selective Na(+) channel activated directly by PI(3,5)P2 (phosphatidylinositol 3,5-bisphosphate). Localizes to the lysosomal and late endosome membranes where it regulates organellar membrane excitability, membrane trafficking, and pH homeostasis. Is associated with a plethora of physiological processes, including mTOR-dependent nutrient sensing, skin pigmentation and autophagy. Ion selectivity is not fixed but rather agonist-dependent and under defined ionic conditions, can be readily activated by both NAADP and PI(3,5)P2. As calcium channel, it increases the pH in the lysosomal lumen, as sodium channel, it promotes lysosomal exocytosis. Plays a crucial role in endolysosomal trafficking in the endolysosomal degradation pathway and is potentially involved in the homeostatic control of many macromolecules and cell metabolites. Also expressed in melanosomes of pigmented cells where mediates a Ca(2+) channel and/or PI(3,5)P2-activated melanosomal Na(+) channel to acidify pH and inhibit tyrosinase activity required for melanogenesis and pigmentation. Unlike the voltage-dependent TPCN1, TPCN2 is voltage independent and can be activated solely by PI(3,5)P2 binding. In contrast, PI(4,5)P2, PI(3,4)P2, PI(3)P and PI(5)P have no obvious effect on channel activation. Functionally, (Microbial infection) During Ebola virus (EBOV) infection, controls the movement of endosomes containing virus particles and is required by EBOV to escape from the endosomal network into the cell cytoplasm. (Microbial infection) Required for cell entry of coronaviruses SARS-CoV and SARS-CoV-2, as well as human coronavirus EMC (HCoV-EMC), by endocytosis. This Homo sapiens (Human) protein is Two pore channel protein 2.